We begin with the raw amino-acid sequence, 420 residues long: UDP-N-acetylmuramoylalanine--D-glutamate ligase (420 aa).

ATP is bound at residue 109–115 (GSAGKTT).

It belongs to the MurCDEF family.

The protein resides in the cytoplasm. The catalysed reaction is UDP-N-acetyl-alpha-D-muramoyl-L-alanine + D-glutamate + ATP = UDP-N-acetyl-alpha-D-muramoyl-L-alanyl-D-glutamate + ADP + phosphate + H(+). It participates in cell wall biogenesis; peptidoglycan biosynthesis. In terms of biological role, cell wall formation. Catalyzes the addition of glutamate to the nucleotide precursor UDP-N-acetylmuramoyl-L-alanine (UMA). This is UDP-N-acetylmuramoylalanine--D-glutamate ligase from Chlamydia abortus (strain DSM 27085 / S26/3) (Chlamydophila abortus).